We begin with the raw amino-acid sequence, 2844 residues long: Sodium channel protein 60E (2844 aa).

Residues 1-121 lie on the Cytoplasmic side of the membrane; the sequence is MSDDQATFND…WSPARRVCVY (121 aa). One copy of the I repeat lies at 107–434; sequence FLFYPWSPAR…FDPSVLNVKK (328 aa). A helical transmembrane segment spans residues 122–145; sequence IATNQFFDYCVMATILFNCIFLAM. Residues 146–151 are Extracellular-facing; that stretch reads TETVEE. Residues 152–172 form a helical membrane-spanning segment; the sequence is AEYIFLAIYSIEMVIKIIAKG. Residues 173-183 are Cytoplasmic-facing; sequence FLLNKYTYLRN. Residues 184-202 form a helical membrane-spanning segment; sequence PWNWLDFVVITSGYATIGM. The Extracellular portion of the chain corresponds to 203–208; it reads EVGNLA. A helical; Voltage-sensor membrane pass occupies residues 209-228; sequence GLRTFRVLRALKTVSIMPGL. At 229–244 the chain is on the cytoplasmic side; sequence KTIINALLHSFRQLAE. A helical membrane pass occupies residues 245–265; sequence VMTLTIFCLMVFALFALQVYM. Residues 266 to 340 lie on the Extracellular side of the membrane; sequence GELRNKCVRQ…PNHGYTNFDN (75 aa). An intrachain disulfide couples C272 to C318. Residues N282, N293, and N311 are each glycosylated (N-linked (GlcNAc...) asparagine). The segment at residues 341-365 is an intramembrane region (pore-forming); sequence FMWSMLTTFQLITLDYWENVYNMVL. Residues 366-374 are Extracellular-facing; the sequence is ATCGPMSVS. A helical membrane pass occupies residues 375–395; that stretch reads FFTVVVFFGSFYLINLMLAVV. At 396–687 the chain is on the cytoplasmic side; it reads ALSYEEEAEI…QNCLYKVVRD (292 aa). The disordered stretch occupies residues 452–610; sequence ASYSKKKTRR…QDTTNDMGHV (159 aa). Basic residues predominate over residues 455-465; that stretch reads SKKKTRRKKTK. Residues 469–479 are compositionally biased toward gly residues; that stretch reads EGGTNGNGNGS. Composition is skewed to low complexity over residues 511-520 and 577-586; these read QAQKQYQQME and SSNSSGVNRE. A compositionally biased stretch (acidic residues) spans 593 to 603; that stretch reads GVVDDHEEQDT. The II repeat unit spans residues 668-1130; sequence CTDYESWLQF…ESIELLGQYN (463 aa). Residues 688–708 form a helical membrane-spanning segment; the sequence is PLFELAITLCIVLNTAFLAME. Residues 709-718 lie on the Extracellular side of the membrane; the sequence is HHGMSESFRN. The helical transmembrane segment at 719 to 743 threads the bilayer; sequence ALDVGNKVFTSIFTFECIVKLMALS. The Cytoplasmic segment spans residues 744-749; that stretch reads KDFFLC. A helical membrane pass occupies residues 750–769; sequence GWNIFDLLIVTASLLDIIFE. Topologically, residues 770–775 are extracellular; it reads LVDGLS. Residues 776–795 form a helical; Voltage-sensor membrane-spanning segment; the sequence is VLRGLRLLRVLKLAQSWTTM. The Cytoplasmic segment spans residues 796–810; that stretch reads KVLLSIIISTIGALG. The helical transmembrane segment at 811–832 threads the bilayer; sequence NLTLILVIVIYIFAVIGMQLFS. The Extracellular portion of the chain corresponds to 833-852; that stretch reads KDYTPEKFDPDPVPRWNFND. Positions 853-873 form an intramembrane region, pore-forming; that stretch reads FFHSFMMIFRILCGEWIEPLW. The Extracellular segment spans residues 874 to 889; the sequence is DCMRAEEEQGASTCFA. C875 and C887 are disulfide-bonded. A helical membrane pass occupies residues 890-910; it reads IFLPTLVMGNFMVLNLFLALL. Topologically, residues 911–1742 are cytoplasmic; the sequence is LNSFNSEELK…SAKHWTRVRT (832 aa). A compositionally biased stretch (polar residues) spans 1129-1157; the sequence is YNSTDTDPYANDQRSGCGSFNRGDSLQDN. Disordered stretches follow at residues 1129-1166, 1185-1224, 1268-1288, 1577-1630, and 1635-1654; these read YNSTDTDPYANDQRSGCGSFNRGDSLQDNSSRRYGSEE, YRKSLDRLSQSSGQSQRSLLKSEEAEMRRHSSGQSLNSMS, ISNVMRSRRPSSQMGQPENET, APTP…ADAS, and LAMAQKTEQSQSTAPDATQK. Low complexity predominate over residues 1191–1203; it reads RLSQSSGQSQRSL. Over residues 1204–1213 the composition is skewed to basic and acidic residues; that stretch reads LKSEEAEMRR. 3 stretches are compositionally biased toward polar residues: residues 1277 to 1286, 1604 to 1618, and 1640 to 1654; these read PSSQMGQPEN, PQSTLDKAASFQSAR, and KTEQSQSTAPDATQK. The III repeat unit spans residues 1723–2040; that stretch reads PWFMSCMDTQ…QKHYYTAMKK (318 aa). The chain crosses the membrane as a helical span at residues 1743-1763; sequence AVLTVVDTPAFEWFVLVLIFA. Residues 1764–1789 are Extracellular-facing; sequence SSITLCFEDINLDKNKTLKRVLYWIN. Residues N1778 and N1789 are each glycosylated (N-linked (GlcNAc...) asparagine). The chain crosses the membrane as a helical span at residues 1790 to 1810; it reads FSFCLIFVVEMILKWLALGFS. Topologically, residues 1811 to 1813 are cytoplasmic; that stretch reads KYF. A helical membrane pass occupies residues 1814-1834; sequence TSFWTILDFIIVFVSVFSLLI. Topologically, residues 1835–1839 are extracellular; sequence EENEN. A helical; Voltage-sensor membrane pass occupies residues 1840 to 1861; that stretch reads LKVLRSLRTLRALRPLRAISRW. Residues 1862–1880 lie on the Cytoplasmic side of the membrane; the sequence is QGMRIVVNALMYAIPSIFN. The helical transmembrane segment at 1881–1902 threads the bilayer; sequence VLLVCLVFWLIFSIMGVQFFGG. The Extracellular portion of the chain corresponds to 1903–1943; the sequence is KFFKCVNEMGELLPITEVNDKWDCIEQNYTWINSKITFDHV. N-linked (GlcNAc...) asparagine glycosylation occurs at N1930. The segment at residues 1944-1965 is an intramembrane region (pore-forming); the sequence is GMGYLALLQVATFEGWMEVMAD. Residues 1966–1981 lie on the Extracellular side of the membrane; the sequence is AVDARGVDLQPQREAN. A helical membrane pass occupies residues 1982 to 2002; sequence LYAYIYFVIFIVCGSFFTLNL. The Cytoplasmic portion of the chain corresponds to 2003–2069; sequence FIGVIIDNFN…MFYDLSNSRR (67 aa). An IV repeat occupies 2050 to 2311; that stretch reads IKRPINHFLA…NMYIAIILEN (262 aa). A helical transmembrane segment spans residues 2070–2090; sequence FEIAIFVLIFLNMLTMGIEHY. The Extracellular segment spans residues 2091–2095; that stretch reads DQPHA. A helical transmembrane segment spans residues 2096 to 2116; the sequence is VFFILEVSNAFFTTVFGLEAI. Topologically, residues 2117 to 2132 are cytoplasmic; sequence VKIVGLRYHYFTVPWN. Residues 2133-2153 traverse the membrane as a helical segment; that stretch reads VFDFLLVLASIFGILMEDIMI. Residues 2154 to 2162 are Extracellular-facing; that stretch reads DLPISPTLL. The chain crosses the membrane as a helical; Voltage-sensor span at residues 2163-2184; that stretch reads RVVRVFRIGRILRLIKAAKGIR. At 2185–2199 the chain is on the cytoplasmic side; sequence KLLFALVVSLPALFN. Residues 2200–2220 traverse the membrane as a helical segment; sequence IGALLGLITFIYAILGMSLFG. At 2221–2236 the chain is on the extracellular side; sequence NVKLQGALDDMVNFQT. Residues 2237 to 2259 constitute an intramembrane region (pore-forming); sequence FGRSMQLLFRLMTSAGWNDVLES. At 2260–2288 the chain is on the extracellular side; sequence LMIQPPDCDPFIHGHTNGNCGHPLLAITY. A helical membrane pass occupies residues 2289 to 2309; it reads FTSFIIISYMIVINMYIAIIL. At 2310-2844 the chain is on the cytoplasmic side; sequence ENFNQAHQEE…QFESLPDRQR (535 aa). The 30-residue stretch at 2441-2470 folds into the IQ domain; it reads QEKAAKTIQTGWKEYLRRKREKERSNSGDS. Disordered regions lie at residues 2457–2479, 2584–2668, 2780–2802, and 2818–2844; these read RRKREKERSNSGDSATQTSSPGG, SLTS…LSAQ, DSPKDPPRGDFSSAPIDDVGAPI, and NPEKATDDQGNGQDETAQFESLPDRQR. The segment covering 2467-2479 has biased composition (polar residues); it reads SGDSATQTSSPGG. Residues 2595-2632 show a composition bias toward low complexity; that stretch reads AMNNTTNTTSNSASTSGTASSTATAPATGCGPAATSAS. Over residues 2647-2658 the composition is skewed to basic residues; it reads SRKRASSFIRKK. The span at 2825–2836 shows a compositional bias: polar residues; that stretch reads DQGNGQDETAQF.

This sequence belongs to the sodium channel (TC 1.A.1.10) family. NaCP60E subfamily. As to expression, in embryonic and larval stages, expression is limited to very few non-neuronal cells in either the CNS or PNS. In pupal and adult stages, expressed in cell bodies of the fly central nervous system, including optic lobes, central brain, subesophageal ganglion, thoracico-abdominal ganglion, major olfactory organs, the third antennal segment and the maxillary palps.

The protein resides in the cell membrane. Functionally, mediates the voltage-dependent sodium ion permeability of excitable membranes. Plays a role in processing of olfactory information during the olfactory avoidance response. The protein is Sodium channel protein 60E (NaCP60E) of Drosophila melanogaster (Fruit fly).